Reading from the N-terminus, the 353-residue chain is Probable dual-specificity RNA methyltransferase RlmN (353 aa).

Glu-90 (proton acceptor) is an active-site residue. A Radical SAM core domain is found at 96–326; sequence YKHGNSICIS…VTTRREMGSD (231 aa). Cys-103 and Cys-331 are joined by a disulfide. [4Fe-4S] cluster-binding residues include Cys-110, Cys-114, and Cys-117. S-adenosyl-L-methionine-binding positions include 157–158, Ser-189, 212–214, and Asn-288; these read GE and SLH. The active-site S-methylcysteine intermediate is the Cys-331.

This sequence belongs to the radical SAM superfamily. RlmN family. [4Fe-4S] cluster serves as cofactor.

It is found in the cytoplasm. It carries out the reaction adenosine(2503) in 23S rRNA + 2 reduced [2Fe-2S]-[ferredoxin] + 2 S-adenosyl-L-methionine = 2-methyladenosine(2503) in 23S rRNA + 5'-deoxyadenosine + L-methionine + 2 oxidized [2Fe-2S]-[ferredoxin] + S-adenosyl-L-homocysteine. It catalyses the reaction adenosine(37) in tRNA + 2 reduced [2Fe-2S]-[ferredoxin] + 2 S-adenosyl-L-methionine = 2-methyladenosine(37) in tRNA + 5'-deoxyadenosine + L-methionine + 2 oxidized [2Fe-2S]-[ferredoxin] + S-adenosyl-L-homocysteine. Functionally, specifically methylates position 2 of adenine 2503 in 23S rRNA and position 2 of adenine 37 in tRNAs. This Clostridium beijerinckii (strain ATCC 51743 / NCIMB 8052) (Clostridium acetobutylicum) protein is Probable dual-specificity RNA methyltransferase RlmN.